A 248-amino-acid polypeptide reads, in one-letter code: UDP-2,3-diacylglucosamine hydrolase (248 aa).

Positions 8, 10, 41, 79, and 114 each coordinate Mn(2+). Position 79–80 (asparagine 79–arginine 80) interacts with substrate. 4 residues coordinate substrate: aspartate 122, serine 160, aspartate 171, and histidine 202. Positions 202 and 204 each coordinate Mn(2+).

This sequence belongs to the LpxH family. Mn(2+) is required as a cofactor.

The protein resides in the cell inner membrane. It catalyses the reaction UDP-2-N,3-O-bis[(3R)-3-hydroxytetradecanoyl]-alpha-D-glucosamine + H2O = 2-N,3-O-bis[(3R)-3-hydroxytetradecanoyl]-alpha-D-glucosaminyl 1-phosphate + UMP + 2 H(+). It participates in glycolipid biosynthesis; lipid IV(A) biosynthesis; lipid IV(A) from (3R)-3-hydroxytetradecanoyl-[acyl-carrier-protein] and UDP-N-acetyl-alpha-D-glucosamine: step 4/6. Its function is as follows. Hydrolyzes the pyrophosphate bond of UDP-2,3-diacylglucosamine to yield 2,3-diacylglucosamine 1-phosphate (lipid X) and UMP by catalyzing the attack of water at the alpha-P atom. Involved in the biosynthesis of lipid A, a phosphorylated glycolipid that anchors the lipopolysaccharide to the outer membrane of the cell. In Stenotrophomonas maltophilia (strain R551-3), this protein is UDP-2,3-diacylglucosamine hydrolase.